Consider the following 377-residue polypeptide: Stimulator of interferon genes protein (377 aa).

Residues 1 to 21 (MRRAEENNGFGTIPKRRNQHT) are Cytoplasmic-facing. The helical transmembrane segment at 22 to 42 (PFYASIGMIVVIIVAFTSYHI) threads the bilayer. Over 43–57 (TSYGDDRNRAMRQYS) the chain is Extracellular. A helical membrane pass occupies residues 58 to 80 (FTFSLAYLAFLVGELLRRCCLFA). Over 81 to 101 (EEYRHIETRYNGSLKKAIQTT) the chain is Cytoplasmic. The helical transmembrane segment at 102 to 122 (FSFGHNNVLFVASLLFFVVFV) threads the bilayer. Topologically, residues 123-154 (ASNDPNGSSSVIQGNSTAEPHTEMRQTSGWQG) are extracellular. The chain crosses the membrane as a helical span at residues 155 to 175 (LWGQFIISALLTPLVVHLLGL). At 176-377 (RELSKVEESQ…LKDSELEIGG (202 aa)) the chain is on the cytoplasmic side. Residues Y206, R272, 278–279 (RH), and T303 contribute to the 2',3'-cGAMP site. Residues Y206, R272, R278, and 300-303 (EYAT) each bind 3',3'-c-di-GMP.

This sequence belongs to the TMEM173 family. In terms of assembly, homodimer.

The protein localises to the endoplasmic reticulum membrane. Functionally, sensor of cytosolic DNA from bacteria and viruses that promotes autophagy. Acts by recognizing and binding cyclic GMP-AMP (cGAMP), a messenger produced by CGAS in response to DNA in the cytosol. Following cGAMP-binding, promotes the formation of autophagosomes, leading to target cytosolic DNA for degradation by the lysosome. Exhibits guanine base-specific ligand recognition. Binds 3'-3'linked cGAMP, 2'-3' linked cGAMP and 3'-3' linked c-di-GMP with much greater affinity as compared to 3'-3' linked c-di-AMP. Lacks the C-terminal tail (CTT) found in mammalian orthologs which is essential for interferon signaling. This is Stimulator of interferon genes protein from Nematostella vectensis (Starlet sea anemone).